A 205-amino-acid chain; its full sequence is Transcriptional regulator GfcR (205 aa).

Belongs to the purine/pyrimidine phosphoribosyltransferase family. GfcR subfamily.

The polypeptide is Transcriptional regulator GfcR (Methanococcus vannielii (strain ATCC 35089 / DSM 1224 / JCM 13029 / OCM 148 / SB)).